Consider the following 127-residue polypeptide: Large ribosomal subunit protein bL12 (127 aa).

It belongs to the bacterial ribosomal protein bL12 family. In terms of assembly, homodimer. Part of the ribosomal stalk of the 50S ribosomal subunit. Forms a multimeric L10(L12)X complex, where L10 forms an elongated spine to which 2 to 4 L12 dimers bind in a sequential fashion. Binds GTP-bound translation factors.

In terms of biological role, forms part of the ribosomal stalk which helps the ribosome interact with GTP-bound translation factors. Is thus essential for accurate translation. This is Large ribosomal subunit protein bL12 from Syntrophobacter fumaroxidans (strain DSM 10017 / MPOB).